The primary structure comprises 365 residues: Methionine import ATP-binding protein MetN (365 aa).

The 236-residue stretch at 26-261 (VRLVDLKRRF…PQSDITKSLL (236 aa)) folds into the ABC transporter domain. 58-65 (GRSGAGKS) provides a ligand contact to ATP.

This sequence belongs to the ABC transporter superfamily. Methionine importer (TC 3.A.1.24) family. In terms of assembly, the complex is composed of two ATP-binding proteins (MetN), two transmembrane proteins (MetI) and a solute-binding protein (MetQ).

It is found in the cell inner membrane. It carries out the reaction L-methionine(out) + ATP + H2O = L-methionine(in) + ADP + phosphate + H(+). It catalyses the reaction D-methionine(out) + ATP + H2O = D-methionine(in) + ADP + phosphate + H(+). In terms of biological role, part of the ABC transporter complex MetNIQ involved in methionine import. Responsible for energy coupling to the transport system. This Mesorhizobium japonicum (strain LMG 29417 / CECT 9101 / MAFF 303099) (Mesorhizobium loti (strain MAFF 303099)) protein is Methionine import ATP-binding protein MetN.